A 313-amino-acid chain; its full sequence is Metal ABC transporter substrate-binding lipoprotein (313 aa).

Residues 1–23 (MIEKYKNILITFIALAAIVFLVG) form the signal peptide. Cys-24 carries the N-palmitoyl cysteine lipid modification. The S-diacylglycerol cysteine moiety is linked to residue Cys-24. Positions 71, 143, 209, and 284 each coordinate Zn(2+).

Belongs to the bacterial solute-binding protein 9 family. Lipoprotein receptor antigen (Lrai) subfamily.

It is found in the cell membrane. In terms of biological role, part of an ATP-driven transport system for a metal; probably for manganese. The chain is Metal ABC transporter substrate-binding lipoprotein (mtsA) from Lactococcus lactis subsp. lactis (strain IL1403) (Streptococcus lactis).